Here is a 972-residue protein sequence, read N- to C-terminus: Glycine dehydrogenase (decarboxylating) (972 aa).

Residue Lys713 is modified to N6-(pyridoxal phosphate)lysine.

It belongs to the GcvP family. In terms of assembly, the glycine cleavage system is composed of four proteins: P, T, L and H. The cofactor is pyridoxal 5'-phosphate.

It catalyses the reaction N(6)-[(R)-lipoyl]-L-lysyl-[glycine-cleavage complex H protein] + glycine + H(+) = N(6)-[(R)-S(8)-aminomethyldihydrolipoyl]-L-lysyl-[glycine-cleavage complex H protein] + CO2. The glycine cleavage system catalyzes the degradation of glycine. The P protein binds the alpha-amino group of glycine through its pyridoxal phosphate cofactor; CO(2) is released and the remaining methylamine moiety is then transferred to the lipoamide cofactor of the H protein. In Aromatoleum aromaticum (strain DSM 19018 / LMG 30748 / EbN1) (Azoarcus sp. (strain EbN1)), this protein is Glycine dehydrogenase (decarboxylating).